The primary structure comprises 544 residues: Putative ligase Rv1013 (544 aa).

K528 is covalently cross-linked (Isoglutamyl lysine isopeptide (Lys-Gln) (interchain with Q-Cter in protein Pup)).

This sequence belongs to the ATP-dependent AMP-binding enzyme family. Pupylated at Lys-528 by the prokaryotic ubiquitin-like protein Pup, which probably leads to its degradation by the proteasome.

This chain is Putative ligase Rv1013 (pks16), found in Mycobacterium tuberculosis (strain ATCC 25618 / H37Rv).